An 87-amino-acid polypeptide reads, in one-letter code: Small ribosomal subunit protein bS20 (87 aa).

Positions 1-15 are enriched in basic residues; the sequence is MANHKSAAKRARQSI. Residues 1-29 are disordered; it reads MANHKSAAKRARQSIRKTAVNNARKSTVK. Positions 19-29 are enriched in polar residues; it reads AVNNARKSTVK.

Belongs to the bacterial ribosomal protein bS20 family.

In terms of biological role, binds directly to 16S ribosomal RNA. This is Small ribosomal subunit protein bS20 from Bdellovibrio bacteriovorus (strain ATCC 15356 / DSM 50701 / NCIMB 9529 / HD100).